The sequence spans 471 residues: Neuraminidase (471 aa).

Topologically, residues 1–6 (MNPNQK) are intravirion. Residues 7–27 (LFALSGVAIALSVMNLLIGIS) traverse the membrane as a helical segment. Residues 11-33 (SGVAIALSVMNLLIGISNVGLNV) are involved in apical transport and lipid raft association. The Virion surface portion of the chain corresponds to 28-471 (NVGLNVSLHL…PDGAQIQYFS (444 aa)). N-linked (GlcNAc...) asparagine; by host glycans are attached at residues Asn32, Asn47, Asn56, Asn57, Asn67, Asn68, and Asn87. Positions 36–87 (HLKEKGTKQEENLTCTTITQNNTTVVENTYVNNTTIITKEPDLKAPSYLLLN) are hypervariable stalk region. The head of neuraminidase stretch occupies residues 90-471 (LCSVEGWVVI…PDGAQIQYFS (382 aa)). 8 cysteine pairs are disulfide-bonded: Cys91–Cys419, Cys123–Cys128, Cys183–Cys230, Cys232–Cys237, Cys278–Cys291, Cys280–Cys289, Cys318–Cys336, and Cys423–Cys450. Arg117 contacts substrate. Asn145 is a glycosylation site (N-linked (GlcNAc...) asparagine; by host). Asp150 functions as the Proton donor/acceptor in the catalytic mechanism. Arg151 is a binding site for substrate. Asn200 and Asn234 each carry an N-linked (GlcNAc...) asparagine; by host glycan. 276–277 (EE) serves as a coordination point for substrate. Arg292 contributes to the substrate binding site. Asp293, Gly297, and Asp324 together coordinate Ca(2+). A substrate-binding site is contributed by Arg371. An N-linked (GlcNAc...) asparagine; by host glycan is attached at Asn401. Tyr405 acts as the Nucleophile in catalysis.

The protein belongs to the glycosyl hydrolase 34 family. As to quaternary structure, homotetramer. It depends on Ca(2+) as a cofactor. N-glycosylated.

Its subcellular location is the virion membrane. The protein localises to the host apical cell membrane. It catalyses the reaction Hydrolysis of alpha-(2-&gt;3)-, alpha-(2-&gt;6)-, alpha-(2-&gt;8)- glycosidic linkages of terminal sialic acid residues in oligosaccharides, glycoproteins, glycolipids, colominic acid and synthetic substrates.. With respect to regulation, inhibited by the neuraminidase inhibitors zanamivir (Relenza) and oseltamivir (Tamiflu). These drugs interfere with the release of progeny virus from infected cells and are effective against all influenza strains. Resistance to neuraminidase inhibitors is quite rare. Functionally, catalyzes the removal of terminal sialic acid residues from viral and cellular glycoconjugates. Cleaves off the terminal sialic acids on the glycosylated HA during virus budding to facilitate virus release. Additionally helps virus spread through the circulation by further removing sialic acids from the cell surface. These cleavages prevent self-aggregation and ensure the efficient spread of the progeny virus from cell to cell. Otherwise, infection would be limited to one round of replication. Described as a receptor-destroying enzyme because it cleaves a terminal sialic acid from the cellular receptors. May facilitate viral invasion of the upper airways by cleaving the sialic acid moieties on the mucin of the airway epithelial cells. Likely to plays a role in the budding process through its association with lipid rafts during intracellular transport. May additionally display a raft-association independent effect on budding. Plays a role in the determination of host range restriction on replication and virulence. Sialidase activity in late endosome/lysosome traffic seems to enhance virus replication. In Influenza A virus (strain A/Duck/Germany/1949 H10N7), this protein is Neuraminidase.